The sequence spans 291 residues: LKAMDPTPPLWIKTESPSTPWTNVTLLCVATNTEELSFQVWKDGELLSTLPVVGLVGKFWLGPVTADNRGIYRCRILTSENDWTPLSAPVEVTGKEPLPAPSLHAEPGPWILPGLETKLHCRGMLLGMIFDLYQEGEQEPVKSSQTPSAEATFIVNSTGNYSCLYRAPASAPSVNSTPSETIHVVIPDFLPKANFYILNDRDFRPGDIVTFSCWARFSEREYDLEFKLFKDGQETPVEVVPISDPMKVFFDLTAVGPKDGGKYSCRYRFRNGPPIWSEDSNVLELDLSTGQ.

Ig-like V-type domains follow at residues 22–79 (TNVT…ILTS) and 114–171 (GLET…PASA). Asn-23 carries N-linked (GlcNAc...) asparagine glycosylation. 2 disulfide bridges follow: Cys-28–Cys-74 and Cys-121–Cys-163. N-linked (GlcNAc...) asparagine glycans are attached at residues Asn-156, Asn-160, and Asn-175. An Ig-like V-type 3 domain is found at 191–288 (PKANFYILND…DSNVLELDLS (98 aa)). Cys-213 and Cys-265 are oxidised to a cystine.

In terms of assembly, homodimer. Post-translationally, N-glycosylated. Blood and milk.

In terms of biological role, metalloproteinase inhibitor. In Didelphis marsupialis (Southern opossum), this protein is Venom metalloproteinase inhibitor DM43.